A 61-amino-acid polypeptide reads, in one-letter code: Metallothionein-2 (61 aa).

At methionine 1 the chain carries N-acetylmethionine. Positions 1–29 (MDPNCSCAAGGSCTCAGSCKCKECRCTSC) are beta. The a divalent metal cation site is built by cysteine 5, cysteine 7, cysteine 13, cysteine 15, cysteine 19, cysteine 21, cysteine 24, cysteine 26, cysteine 29, cysteine 33, cysteine 34, cysteine 36, cysteine 37, cysteine 41, cysteine 44, cysteine 48, cysteine 50, and cysteine 57. Positions 30 to 61 (KKSCCSCCPVGCAKCAQGCICKGASDKCSCCA) are alpha. Position 58 is a phosphoserine (serine 58). Positions 59 and 60 each coordinate a divalent metal cation.

Belongs to the metallothionein superfamily. Type 1 family. Interacts with EOLA1.

Functionally, metallothioneins have a high content of cysteine residues that bind various heavy metals; these proteins are transcriptionally regulated by both heavy metals and glucocorticoids. The protein is Metallothionein-2 (MT2A) of Canis lupus familiaris (Dog).